Here is a 721-residue protein sequence, read N- to C-terminus: Ribonucleoside-diphosphate reductase subunit alpha (721 aa).

Residues T159, 175–176 (SC), G204, 384–388 (NLCSE), and 589–593 (PTGSI) each bind substrate. A disulfide bond links C176 and C413. The Proton acceptor role is filled by N384. Residue C386 is the Cysteine radical intermediate of the active site. E388 acts as the Proton acceptor in catalysis.

The protein belongs to the ribonucleoside diphosphate reductase large chain family. Tetramer of two alpha and two beta subunits.

The enzyme catalyses a 2'-deoxyribonucleoside 5'-diphosphate + [thioredoxin]-disulfide + H2O = a ribonucleoside 5'-diphosphate + [thioredoxin]-dithiol. With respect to regulation, under complex allosteric control mediated by deoxynucleoside triphosphates and ATP binding. The type of nucleotide bound at the specificity site determines substrate preference. It seems probable that ATP makes the enzyme reduce CDP and UDP, dGTP favors ADP reduction and dTTP favors GDP reduction. In terms of biological role, provides the precursors necessary for DNA synthesis. Catalyzes the biosynthesis of deoxyribonucleotides from the corresponding ribonucleotides. This chain is Ribonucleoside-diphosphate reductase subunit alpha (nrdE), found in Mycoplasma pneumoniae (strain ATCC 29342 / M129 / Subtype 1) (Mycoplasmoides pneumoniae).